The sequence spans 245 residues: tRNA (guanine-N(1)-)-methyltransferase (245 aa).

Residues Gly113 and 133 to 138 contribute to the S-adenosyl-L-methionine site; that span reads IGDYVL.

This sequence belongs to the RNA methyltransferase TrmD family. In terms of assembly, homodimer.

It is found in the cytoplasm. It carries out the reaction guanosine(37) in tRNA + S-adenosyl-L-methionine = N(1)-methylguanosine(37) in tRNA + S-adenosyl-L-homocysteine + H(+). Functionally, specifically methylates guanosine-37 in various tRNAs. This is tRNA (guanine-N(1)-)-methyltransferase from Actinobacillus succinogenes (strain ATCC 55618 / DSM 22257 / CCUG 43843 / 130Z).